Here is a 156-residue protein sequence, read N- to C-terminus: ATP synthase subunit b (156 aa).

A helical transmembrane segment spans residues 7 to 29 (LIGQLIAFALFTWFCVKFVWPPI).

It belongs to the ATPase B chain family. F-type ATPases have 2 components, F(1) - the catalytic core - and F(0) - the membrane proton channel. F(1) has five subunits: alpha(3), beta(3), gamma(1), delta(1), epsilon(1). F(0) has three main subunits: a(1), b(2) and c(10-14). The alpha and beta chains form an alternating ring which encloses part of the gamma chain. F(1) is attached to F(0) by a central stalk formed by the gamma and epsilon chains, while a peripheral stalk is formed by the delta and b chains.

It localises to the cell inner membrane. F(1)F(0) ATP synthase produces ATP from ADP in the presence of a proton or sodium gradient. F-type ATPases consist of two structural domains, F(1) containing the extramembraneous catalytic core and F(0) containing the membrane proton channel, linked together by a central stalk and a peripheral stalk. During catalysis, ATP synthesis in the catalytic domain of F(1) is coupled via a rotary mechanism of the central stalk subunits to proton translocation. Functionally, component of the F(0) channel, it forms part of the peripheral stalk, linking F(1) to F(0). The chain is ATP synthase subunit b from Mannheimia succiniciproducens (strain KCTC 0769BP / MBEL55E).